Reading from the N-terminus, the 245-residue chain is Lytic switch protein BZLF1 (245 aa).

Residues 1-167 (MMDPNSTSED…RTRKPLQPES (167 aa)) form a transactivation region. Phosphothreonine is present on residues T14 and T159. A disordered region spans residues 145–167 (GAPQPAPAAAPARRTRKPLQPES). The Bipartite nuclear localization signal signature appears at 157–194 (RRTRKPLQPESLEECDSELEIKRYKNRVASRKCRAKFK). A phosphoserine mark is found at S167, S173, and S186. The segment at 178–195 (KRYKNRVASRKCRAKFKH) is basic motif. Residues 178-228 (KRYKNRVASRKCRAKFKHLLQHYREVASAKSSENDRLRLLLKQMCPSLDVD) enclose the bZIP domain. A leucine-zipper region spans residues 196–228 (LLQHYREVASAKSSENDRLRLLLKQMCPSLDVD). The accessory activation domain stretch occupies residues 229–245 (SIIPRTPDVLHEDLLNF).

The protein belongs to the bZIP family. As to quaternary structure, homodimer. Interacts (via b-ZIP domain) with the DNA polymerase processivity factor BMRF1 (via N-terminus); this interaction may inhibit BZLF1-induced transcription of the BMRF1 promoter. Interacts with human UBN1, CRTC2 and RACK1. Interacts (via N-terminus) with human PAX5 (via N-terminus); this interaction inhibits BZLF1-mediated lytic viral reactivation. Interacts (via leucine-zipper domain) with host CEBPA; this interaction induces G1 host cell cycle arrest. Interacts (via C-terminus) with host TP53BP1 (via C-terminus); this interaction is involved in the activation of the viral lytic cycle. Interacts with host chromatin-remodeling ATPase INO80; this interaction participates to the activation of early lytic viral genes by BZLF1. Interacts with host regulator of chromatin SMARCA5/hSNF2H; this interaction participates to the activation of early lytic viral genes by BZLF1. Interacts with host PLSCR1/Phospholipid scramblase 1; this interaction negatively regulates the transcriptional regulatory activity of BZLF1 by preventing the formation of the BZLF1-CBP complex.

Its subcellular location is the host nucleus. Its function is as follows. Transcription factor that acts as a molecular switch to induce the transition from the latent to the lytic or productive phase of the virus cycle. Mediates the switch from the latent to the lytic cycle of infection in cells containing a highly methylated viral genome. Probably binds to silenced chromatin and recruits host chromatin-remodeling enzymes. Regulates this switch by binding to 2 types of ZEBRA response elements (ZREs): the CpG-free AP-1 like elements (latency) and the methylated CpG-containing elements (lytic replication). Activates preferentially the methylated forms of the viral lytic R (BRLF1) and Na (BRRF1) gene promoters, the latters being the first genes activated during Z-mediated reactivation in latently infected cells. BZLF1 and BRLF1 act together to trigger lytic replication. Also binds the lytic origin of replication, oriLyt. Induces G1 cell cycle arrest by stabilizing the host CCAAT/enhancer binding protein CEBPA. This function is important because the lytic cycle preferentially takes place in host cells arrested in G1. This Homo sapiens (Human) protein is Lytic switch protein BZLF1.